Reading from the N-terminus, the 337-residue chain is Peroxidase 14 (337 aa).

The signal sequence occupies residues 1–22 (MARIGSFLILLSLTYALTLCIC). The N-linked (GlcNAc...) asparagine glycan is linked to Asn-24. Intrachain disulfides connect Cys-44/Cys-124, Cys-77/Cys-82, Cys-130/Cys-331, and Cys-209/Cys-241. The Proton acceptor role is filled by His-75. Asp-76, Val-79, Gly-81, Asp-83, and Ser-85 together coordinate Ca(2+). Pro-172 contacts substrate. The N-linked (GlcNAc...) asparagine glycan is linked to Asn-191. His-202 serves as a coordination point for heme b. Thr-203 contributes to the Ca(2+) binding site. N-linked (GlcNAc...) asparagine glycosylation is found at Asn-218 and Asn-249. Positions 254, 257, and 262 each coordinate Ca(2+).

The protein belongs to the peroxidase family. Classical plant (class III) peroxidase subfamily. Requires heme b as cofactor. Ca(2+) serves as cofactor.

The protein resides in the secreted. The enzyme catalyses 2 a phenolic donor + H2O2 = 2 a phenolic radical donor + 2 H2O. In terms of biological role, removal of H(2)O(2), oxidation of toxic reductants, biosynthesis and degradation of lignin, suberization, auxin catabolism, response to environmental stresses such as wounding, pathogen attack and oxidative stress. These functions might be dependent on each isozyme/isoform in each plant tissue. This chain is Peroxidase 14 (PER14), found in Arabidopsis thaliana (Mouse-ear cress).